Consider the following 130-residue polypeptide: Small ribosomal subunit protein uS9 (130 aa).

Positions 99 to 110 (KKAGFLTRDPRM) are enriched in basic and acidic residues. The segment at 99-130 (KKAGFLTRDPRMKERKKYGLKKARRAPQFSKR) is disordered. The segment covering 111-130 (KERKKYGLKKARRAPQFSKR) has biased composition (basic residues).

The protein belongs to the universal ribosomal protein uS9 family.

This is Small ribosomal subunit protein uS9 from Clostridium botulinum (strain Alaska E43 / Type E3).